The chain runs to 89 residues: MKIANVLTLSFAAIIAASSLAVVVSPITDNSRETASSSISQSPPSQWSKKQLIEYCKKNSLKTSGSHEELVIRVQNHLRTASKKVDARP.

The region spanning 44-78 is the SAP domain; the sequence is PSQWSKKQLIEYCKKNSLKTSGSHEELVIRVQNHL.

The chain is SAP domain-containing new25 (new25) from Schizosaccharomyces pombe (strain 972 / ATCC 24843) (Fission yeast).